The following is a 225-amino-acid chain: Platelet-derived growth factor subunit B (225 aa).

The N-terminal stretch at 1 to 12 (LPLCCYLRLVSA) is a signal peptide. The propeptide at 13–73 (EGDPIPEELY…ESESSSRGRR (61 aa)) is removed in mature form. Residue Asn-55 is glycosylated (N-linked (GlcNAc...) asparagine). Intrachain disulfides connect Cys-89–Cys-133, Cys-122–Cys-170, and Cys-126–Cys-172. Positions 183-225 (RSPGTSREHRAKTPQTRVTVRTVRIRRPPKGKHRKFKHTHDKK) are cleaved as a propeptide — removed in mature form.

Belongs to the PDGF/VEGF growth factor family. As to quaternary structure, antiparallel homodimer; disulfide-linked. Antiparallel heterodimer with PDGFA; disulfide-linked. The PDGFB homodimer interacts with PDGFRA and PDGFRB homodimers, and with heterodimers formed by PDGFRA and PDGFRB. The heterodimer composed of PDGFA and PDGFB interacts with PDGFRB homodimers, and with heterodimers formed by PDGFRA and PDGFRB. Interacts with XLKD1. Interacts with LRP1. Interacts with SORL1 (via the N-terminal ectodomain). Interacts with CD82; this interaction inhibits PDGFB-mediated signaling pathway. Expressed in a distinct subpopulation of smooth muscle cells in injured arteries.

The protein localises to the secreted. Growth factor that plays an essential role in the regulation of embryonic development, cell proliferation, cell migration, survival and chemotaxis. Potent mitogen for cells of mesenchymal origin. Required for normal proliferation and recruitment of pericytes and vascular smooth muscle cells in the central nervous system, skin, lung, heart and placenta. Required for normal blood vessel development, and for normal development of kidney glomeruli. Plays an important role in wound healing. Signaling is modulated by the formation of heterodimers with PDGFA. In Rattus norvegicus (Rat), this protein is Platelet-derived growth factor subunit B (Pdgfb).